The sequence spans 91 residues: MNFFTMCVFGAAIGMAIGTLGTAIGQGMAVKSAVEGVARNPGAASKIMTTMMIGLAMIESLAIYALVVCLIILFANPYKDIALKMVETVAK.

The next 2 membrane-spanning stretches (helical) occupy residues 4 to 24 (FTMC…GTAI) and 53 to 73 (IGLA…LIIL).

It belongs to the ATPase C chain family. In terms of assembly, F-type ATPases have 2 components, F(1) - the catalytic core - and F(0) - the membrane proton channel. F(1) has five subunits: alpha(3), beta(3), gamma(1), delta(1), epsilon(1). F(0) has three main subunits: a(1), b(2) and c(10-14). The alpha and beta chains form an alternating ring which encloses part of the gamma chain. F(1) is attached to F(0) by a central stalk formed by the gamma and epsilon chains, while a peripheral stalk is formed by the delta and b chains.

The protein resides in the cell inner membrane. In terms of biological role, f(1)F(0) ATP synthase produces ATP from ADP in the presence of a proton or sodium gradient. F-type ATPases consist of two structural domains, F(1) containing the extramembraneous catalytic core and F(0) containing the membrane proton channel, linked together by a central stalk and a peripheral stalk. During catalysis, ATP synthesis in the catalytic domain of F(1) is coupled via a rotary mechanism of the central stalk subunits to proton translocation. Key component of the F(0) channel; it plays a direct role in translocation across the membrane. A homomeric c-ring of between 10-14 subunits forms the central stalk rotor element with the F(1) delta and epsilon subunits. This Pelobacter propionicus (strain DSM 2379 / NBRC 103807 / OttBd1) protein is ATP synthase subunit c 1.